The chain runs to 238 residues: Tetrahydromethanopterin S-methyltransferase subunit A 1 (238 aa).

Over 2-218 the chain is Cytoplasmic; the sequence is VEKKSPAEGW…RMFAGMYSGK (217 aa). His-84 lines the 5-hydroxybenzimidazolylcob(I)amide pocket. A helical membrane pass occupies residues 219-237; sequence VQGIMIGLAFTLTLGILLL. A topological domain (extracellular) is located at residue Val-238.

It belongs to the MtrA family. The complex is composed of 8 subunits; MtrA, MtrB, MtrC, MtrD, MtrE, MtrF, MtrG and MtrH. It depends on 5-hydroxybenzimidazolylcob(I)amide as a cofactor.

The protein resides in the cell membrane. The catalysed reaction is 5-methyl-5,6,7,8-tetrahydromethanopterin + coenzyme M + 2 Na(+)(in) = 5,6,7,8-tetrahydromethanopterin + methyl-coenzyme M + 2 Na(+)(out). The protein operates within one-carbon metabolism; methanogenesis from CO(2); methyl-coenzyme M from 5,10-methylene-5,6,7,8-tetrahydromethanopterin: step 2/2. Its function is as follows. Part of a complex that catalyzes the formation of methyl-coenzyme M and tetrahydromethanopterin from coenzyme M and methyl-tetrahydromethanopterin. This is an energy-conserving, sodium-ion translocating step. The protein is Tetrahydromethanopterin S-methyltransferase subunit A 1 of Methanothermobacter thermautotrophicus (strain ATCC 29096 / DSM 1053 / JCM 10044 / NBRC 100330 / Delta H) (Methanobacterium thermoautotrophicum).